Reading from the N-terminus, the 1288-residue chain is MNLLLYLLLLVPWVLGSEDGCPAKCTCDKKGFTVDCSNAGLTRIPKGISSNVRSLVLRNNRIHTLIKSDLEGFPLLESLVLTHNKIKVVEENILDHLPELKRLSLSHNLLVYIPPLASESRPLASLNLKRNHIQFIDERWLLQYFPELVQIDLSHNRIQSLRTKLFENLPSLTHAHLHANPWNCDCRVTKVKALLRKVEWERKAYCTNPVELRHQAIDEVEESLLKCAKPEEESWTGDEFKLVCTKNASSSRPVVWLYENAEVDSSSLDGYEIHDSVITVPRKTNVNQMTCTYDYEHVPHHRRLRQSHHSNGAPQFTYKPRDNSYREGSEVKVNCEVMGTPKPSITWYHNGVRFASSRKKQLGLSNNVLRIYPFLEEDSGRYTCEAVNSLGKVSHTFSLDLISSIPPNIYEGPQSVSQNIGGEVVFVCKAKGNPTPDYTWSFDGSTIGHIKGRFMVSDDGTELXISNIEKKDEGYYSCMAGNPVGAMSADAKLTVIGGETRKSSTPQIDEELLRAIAQKARQNVESAVEKTRKQLNQDKITNTNDLKRLFRFSTPKQAVELSKAREIYEESVRLVREHVEKGLILNVDELHPNNVSYESVLHVTHVQALMGLSGCHTGQFKNPCTDTCFHNKYRSFDGQCNNKNKPMNGVSLMPLRRLLKPVYENGFNTPVGWEKGKLYNGYPMPNVREVSRQLVATETITPHRKLSSMVMQWGQFVDHDLTHTVTALSRHSYATGAFCNRTCDNLDPCFNIPLSPSDPRVISESAKYPCIEFERSAAVCGSGETSLVFNRVTYREQMNALTSFLDASNVYGSNEVQAQELRDTYNNNGQLRYDITSAAGKEYLPFEKDSNMDCRRNFSEENPIRCFLAGDLRANEQLALAATHTIFVREHNRIAKKLKKMNGNWDGEVIYHETRKIIGAMMQHITFKHWLPVVFGGQEQMDKFVGKYQGYDPAIDSSVTNAFATAAFRFGHTIINPTLFRLGNDFMSIKQGHIALHKAFFTPELVLTEGGIDPLLRGLFASPLKHPMPTQLLNMELIEKLFMKGHEVSLDLAVMNIQRSRDHGLPSYTEYRQFCNLPVPARWEDMKGYIKDDMIIQKLRGLYGVPQNIDLWVGGIVEEKLENGLFGPTFACIIGEQFRKMRDGDRFWYEKDGVFTPEQMKEIKKVTLARLLCDNGDEIDRIQKDVFMYPGKEKENYGRCEDTEMMDLKAWSKCCDDVCPTMLDRILRSRHRGSRLHGCNQNGLWRPEGAKWIPPNEYCTEEAVFGAPPKKTVLTTEVHSSQRNSVLY.

Residues 1 to 16 (MNLLLYLLLLVPWVLG) form the signal peptide. The region spanning 17–51 (SEDGCPAKCTCDKKGFTVDCSNAGLTRIPKGISSN) is the LRRNT domain. LRR repeat units follow at residues 27–49 (CDKKGFTVDCSNAGLTRIPKGIS), 50–72 (SNVRSLVLRNNRIHTLIKSDLEG), 73–96 (FPLLESLVLTHNKIKVVEENILDH), 97–120 (LPELKRLSLSHNLLVYIPPLASES), 122–143 (PLASLNLKRNHIQFIDERWLLQ), 145–168 (FPELVQIDLSHNRIQSLRTKLFEN), and 204–227 (AYCTNPVELRHQAIDEVEESLLKC). The LRRCT domain maps to 180–228 (NPWNCDCRVTKVKALLRKVEWERKAYCTNPVELRHQAIDEVEESLLKCA). N-linked (GlcNAc...) asparagine glycosylation is present at Asn247. The interval 304–323 (LRQSHHSNGAPQFTYKPRDN) is disordered. 2 Ig-like C2-type domains span residues 314–400 (PQFT…FSLD) and 407–494 (PNIY…AKLT). Cys335 and Cys384 are disulfide-bonded. 2 LRR repeats span residues 356–381 (SSRKKQLGLSNNVLRIYPFLEEDSGR) and 387–412 (VNSLGKVSHTFSLDLISSIPPNIYEG). Cysteines 428 and 478 form a disulfide. N-linked (GlcNAc...) asparagine glycosylation is present at Asn594. An intrachain disulfide couples Cys624 to Cys640. Heme b is bound at residue Asp718. His719 (proton acceptor) is an active-site residue. Asp720 is a binding site for Ca(2+). Cystine bridges form between Cys739/Cys749 and Cys743/Cys770. N-linked (GlcNAc...) asparagine glycosylation occurs at Asn740. Ca(2+) contacts are provided by Thr802, Phe804, Asp806, and Ser808. Asn857 carries an N-linked (GlcNAc...) asparagine glycan. Residues Glu876 and His972 each coordinate heme b. LRR repeat units follow at residues 998–1022 (KAFFTPELVLTEGGIDPLLRGLFAS) and 1049–1073 (SLDLAVMNIQRSRDHGLPSYTEYRQ). Disulfide bonds link Cys1075/Cys1132 and Cys1173/Cys1200. Residues 1168-1189 (LARLLCDNGDEIDRIQKDVFMY) form an LRR 12 repeat.

It belongs to the peroxidase family. XPO subfamily. Ca(2+) is required as a cofactor. Heme b serves as cofactor.

Its subcellular location is the secreted. The protein resides in the extracellular space. The protein localises to the extracellular matrix. It carries out the reaction L-lysyl-[collagen] + L-methionyl-[collagen] + H2O2 = [collagen]-L-lysyl-N-S-L-methionyl-[collagen] + 2 H2O + H(+). It catalyses the reaction bromide + H2O2 = hypobromite + H2O. The enzyme catalyses L-lysyl-[collagen] + L-methionyl-[collagen] + hypobromite = [collagen]-L-lysyl-N-S-L-methionyl-[collagen] + bromide + H2O + H(+). The catalysed reaction is L-tyrosyl-[protein] + bromide + H2O2 + H(+) = 3-bromo-L-tyrosyl-[protein] + 2 H2O. It carries out the reaction hypobromite + L-tyrosyl-[protein] + H(+) = 3-bromo-L-tyrosyl-[protein] + H2O. Catalyzes the two-electron oxidation of bromide by hydrogen peroxide and generates hypobromite as a reactive intermediate which mediates the formation of sulfilimine cross-links between methionine and hydroxylysine residues within an uncross-linked collagen IV NC1 hexamer. Plays a role in the attachment of tissues and in axonal guidance during early developmental stages. May functionally antagonize the peroxidasin pxn-2 to maintain neuronal development. The polypeptide is Peroxidasin homolog (Caenorhabditis briggsae).